An 81-amino-acid chain; its full sequence is ATP synthase subunit c (81 aa).

The next 2 membrane-spanning stretches (helical) occupy residues 5–25 (IAAG…IGAG) and 57–77 (VGLV…FVFA).

This sequence belongs to the ATPase C chain family. In terms of assembly, F-type ATPases have 2 components, F(1) - the catalytic core - and F(0) - the membrane proton channel. F(1) has five subunits: alpha(3), beta(3), gamma(1), delta(1), epsilon(1). F(0) has three main subunits: a(1), b(2) and c(10-14). The alpha and beta chains form an alternating ring which encloses part of the gamma chain. F(1) is attached to F(0) by a central stalk formed by the gamma and epsilon chains, while a peripheral stalk is formed by the delta and b chains.

Its subcellular location is the cell membrane. Its function is as follows. F(1)F(0) ATP synthase produces ATP from ADP in the presence of a proton or sodium gradient. F-type ATPases consist of two structural domains, F(1) containing the extramembraneous catalytic core and F(0) containing the membrane proton channel, linked together by a central stalk and a peripheral stalk. During catalysis, ATP synthesis in the catalytic domain of F(1) is coupled via a rotary mechanism of the central stalk subunits to proton translocation. In terms of biological role, key component of the F(0) channel; it plays a direct role in translocation across the membrane. A homomeric c-ring of between 10-14 subunits forms the central stalk rotor element with the F(1) delta and epsilon subunits. The polypeptide is ATP synthase subunit c (Mycolicibacterium gilvum (strain PYR-GCK) (Mycobacterium gilvum (strain PYR-GCK))).